Consider the following 539-residue polypeptide: Chaperonin GroEL (539 aa).

ATP is bound by residues 29–32 (TIGP), 86–90 (DGTTT), Gly413, 476–478 (NAA), and Asp492.

It belongs to the chaperonin (HSP60) family. In terms of assembly, forms a cylinder of 14 subunits composed of two heptameric rings stacked back-to-back. Interacts with the co-chaperonin GroES.

The protein localises to the cytoplasm. It carries out the reaction ATP + H2O + a folded polypeptide = ADP + phosphate + an unfolded polypeptide.. In terms of biological role, together with its co-chaperonin GroES, plays an essential role in assisting protein folding. The GroEL-GroES system forms a nano-cage that allows encapsulation of the non-native substrate proteins and provides a physical environment optimized to promote and accelerate protein folding. This chain is Chaperonin GroEL, found in Staphylococcus haemolyticus (strain JCSC1435).